Reading from the N-terminus, the 315-residue chain is Malate dehydrogenase (315 aa).

NAD(+) is bound by residues 7-12 (GAGNIG) and Asp-32. Residues Arg-81 and Arg-87 each coordinate substrate. NAD(+)-binding positions include Asn-94 and 117 to 119 (VTN). Positions 119 and 150 each coordinate substrate. The Proton acceptor role is filled by His-174.

Belongs to the LDH/MDH superfamily. MDH type 3 family.

The enzyme catalyses (S)-malate + NAD(+) = oxaloacetate + NADH + H(+). In terms of biological role, catalyzes the reversible oxidation of malate to oxaloacetate. The protein is Malate dehydrogenase of Neorickettsia sennetsu (strain ATCC VR-367 / Miyayama) (Ehrlichia sennetsu).